Here is a 727-residue protein sequence, read N- to C-terminus: Sodium-dependent neutral amino acid transporter SLC6A17 (727 aa).

Over 1–68 (MPKNSKVTQR…DRPAWNSKLQ (68 aa)) the chain is Cytoplasmic. 2 positions are modified to phosphoserine: serine 13 and serine 20. Residues 69 to 89 (YILAQIGFSVGLGNIWRFPYL) form a helical membrane-spanning segment. Over 90 to 96 (CQKNGGG) the chain is Extracellular. Residues 97-116 (AYLVPYLVLLIIIGIPLFFL) traverse the membrane as a helical segment. The Cytoplasmic segment spans residues 117 to 140 (ELAVGQRIRRGSIGVWHYVCPRLG). Residues 141–161 (GIGFSSCIVCLFVGLYYNVII) form a helical membrane-spanning segment. Residues 162 to 224 (GWSVFYFFKS…NSISESGGLN (63 aa)) are Extracellular-facing. N-linked (GlcNAc...) asparagine glycosylation is present at asparagine 186. The chain crosses the membrane as a helical span at residues 225–243 (WKMTVCLLVAWSIVGMAVV). Residues 244-251 (KGIQSSGK) are Cytoplasmic-facing. A helical transmembrane segment spans residues 252–269 (VMYFSSLFPYVVLACFLV). Topologically, residues 270-304 (RGLLLRGAVDGILHMFTPKLDKMLDPQVWREAATQ) are extracellular. Residues 305–322 (VFFALGLGFGGVIAFSSY) form a helical membrane-spanning segment. At 323–333 (NKQDNNCHFDA) the chain is on the cytoplasmic side. The helical transmembrane segment at 334-355 (ALVSFINFFTSVLATLVVFAVL) threads the bilayer. Topologically, residues 356–451 (GFKANIMNEK…FIAFTEAMTH (96 aa)) are extracellular. At tyrosine 377 the chain carries Phosphotyrosine. The N-linked (GlcNAc...) asparagine glycan is linked to asparagine 393. The helical transmembrane segment at 452 to 471 (FPASPFWSVMFFLMLINLGL) threads the bilayer. At 472–494 (GSMIGTMAGITTPIIDTFKVPKE) the chain is on the cytoplasmic side. A helical membrane pass occupies residues 495–513 (MFTVGCCVFAFFVGLLFVQ). At 514-528 (RSGNYFVTMFDDYSA) the chain is on the extracellular side. Residues 529-549 (TLPLTVIVILENIAVAWIYGT) traverse the membrane as a helical segment. Over 550–569 (KKFMQELTEMLGFRPYRFYF) the chain is Cytoplasmic. The helical transmembrane segment at 570-591 (YMWKFVSPLCMAVLTTASIIQL) threads the bilayer. The Extracellular portion of the chain corresponds to 592–618 (GVSPPGYSAWIKEEAAERYLYFPNWAM). A helical membrane pass occupies residues 619 to 641 (ALLITLIAVATLPIPVVFILRHF). At 642–727 (HLLSDGSNTL…LLASTPESEL (86 aa)) the chain is on the cytoplasmic side. A phosphoserine mark is found at serine 665 and serine 701. The disordered stretch occupies residues 680-727 (VPSEAPSPMPTHRSYLGPGSTSPLESSSHPNGRYGSGYLLASTPESEL). Polar residues predominate over residues 698–709 (GSTSPLESSSHP).

This sequence belongs to the sodium:neurotransmitter symporter (SNF) (TC 2.A.22) family. Found exclusively in the central nervous system and is more abundant in the cerebellum and the cerebral cortex. Expressed in PC-12 cell line.

The protein resides in the cytoplasmic vesicle. Its subcellular location is the secretory vesicle. It is found in the synaptic vesicle membrane. It localises to the postsynapse. The protein localises to the presynapse. It carries out the reaction L-proline(in) + Na(+)(in) = L-proline(out) + Na(+)(out). It catalyses the reaction L-leucine(in) + Na(+)(in) = L-leucine(out) + Na(+)(out). The enzyme catalyses glycine(in) + Na(+)(in) = glycine(out) + Na(+)(out). The catalysed reaction is L-alanine(in) + Na(+)(in) = L-alanine(out) + Na(+)(out). It carries out the reaction L-glutamine(in) + Na(+)(in) = L-glutamine(out) + Na(+)(out). Its function is as follows. Synaptic vesicle transporter with apparent selectivity for neutral amino acids. The transport is sodium-coupled but chloride-independent, likely driven by the proton electrochemical gradient generated by vacuolar H(+)-ATPase in an overall electrogenic mechanism. May contribute to the synaptic uptake of neurotransmitter precursors in a process coupled in part to vesicle exocytosis. This chain is Sodium-dependent neutral amino acid transporter SLC6A17, found in Rattus norvegicus (Rat).